The sequence spans 580 residues: 2-succinyl-5-enolpyruvyl-6-hydroxy-3-cyclohexene-1-carboxylate synthase (580 aa).

It belongs to the TPP enzyme family. MenD subfamily. As to quaternary structure, homodimer. Mg(2+) serves as cofactor. It depends on Mn(2+) as a cofactor. Thiamine diphosphate is required as a cofactor.

It catalyses the reaction isochorismate + 2-oxoglutarate + H(+) = 5-enolpyruvoyl-6-hydroxy-2-succinyl-cyclohex-3-ene-1-carboxylate + CO2. It participates in quinol/quinone metabolism; 1,4-dihydroxy-2-naphthoate biosynthesis; 1,4-dihydroxy-2-naphthoate from chorismate: step 2/7. It functions in the pathway quinol/quinone metabolism; menaquinone biosynthesis. Catalyzes the thiamine diphosphate-dependent decarboxylation of 2-oxoglutarate and the subsequent addition of the resulting succinic semialdehyde-thiamine pyrophosphate anion to isochorismate to yield 2-succinyl-5-enolpyruvyl-6-hydroxy-3-cyclohexene-1-carboxylate (SEPHCHC). This is 2-succinyl-5-enolpyruvyl-6-hydroxy-3-cyclohexene-1-carboxylate synthase from Listeria monocytogenes serotype 4b (strain F2365).